We begin with the raw amino-acid sequence, 154 residues long: uncharacterized protein (154 aa).

Residues Cys4, Cys7, Cys16, Cys19, Cys24, Cys28, His32, and Cys36 each coordinate Zn(2+). The HIT-type zinc-finger motif lies at 4–36 (CSICNESEIKYKCPKCSFPYCSLPCWKIHQSQC).

This is an uncharacterized protein from Schizosaccharomyces pombe (strain 972 / ATCC 24843) (Fission yeast).